We begin with the raw amino-acid sequence, 84 residues long: Large ribosomal subunit protein bL27 (84 aa).

Positions M1–G22 are disordered.

Belongs to the bacterial ribosomal protein bL27 family.

The protein is Large ribosomal subunit protein bL27 of Shewanella oneidensis (strain ATCC 700550 / JCM 31522 / CIP 106686 / LMG 19005 / NCIMB 14063 / MR-1).